A 260-amino-acid polypeptide reads, in one-letter code: Thiazole synthase (260 aa).

Lysine 96 functions as the Schiff-base intermediate with DXP in the catalytic mechanism. 1-deoxy-D-xylulose 5-phosphate-binding positions include glycine 157, 184-185 (AG), and 206-207 (NT).

Belongs to the ThiG family. As to quaternary structure, homotetramer. Forms heterodimers with either ThiH or ThiS.

It is found in the cytoplasm. The catalysed reaction is [ThiS sulfur-carrier protein]-C-terminal-Gly-aminoethanethioate + 2-iminoacetate + 1-deoxy-D-xylulose 5-phosphate = [ThiS sulfur-carrier protein]-C-terminal Gly-Gly + 2-[(2R,5Z)-2-carboxy-4-methylthiazol-5(2H)-ylidene]ethyl phosphate + 2 H2O + H(+). It participates in cofactor biosynthesis; thiamine diphosphate biosynthesis. Functionally, catalyzes the rearrangement of 1-deoxy-D-xylulose 5-phosphate (DXP) to produce the thiazole phosphate moiety of thiamine. Sulfur is provided by the thiocarboxylate moiety of the carrier protein ThiS. In vitro, sulfur can be provided by H(2)S. The sequence is that of Thiazole synthase from Rhodopseudomonas palustris (strain TIE-1).